We begin with the raw amino-acid sequence, 672 residues long: Acetyl-coenzyme A synthetase (672 aa).

Residues 217–220 (RRGK) and T335 contribute to the CoA site. Residues 411 to 413 (GEP), 435 to 440 (DTWWQT), D529, R544, and R555 contribute to the ATP site. Residues V566, H568, and I571 each contribute to the Mg(2+) site. Residue R613 coordinates CoA. N6-acetyllysine is present on K638.

It belongs to the ATP-dependent AMP-binding enzyme family. Mg(2+) serves as cofactor. Post-translationally, acetylated. Deacetylation by the SIR2-homolog deacetylase activates the enzyme. The N-terminus is blocked.

It carries out the reaction acetate + ATP + CoA = acetyl-CoA + AMP + diphosphate. Its function is as follows. Catalyzes the conversion of acetate into acetyl-CoA (AcCoA), an essential intermediate at the junction of anabolic and catabolic pathways. AcsA undergoes a two-step reaction. In the first half reaction, AcsA combines acetate with ATP to form acetyl-adenylate (AcAMP) intermediate. In the second half reaction, it can then transfer the acetyl group from AcAMP to the sulfhydryl group of CoA, forming the product AcCoA. This Methanothrix soehngenii (Methanosaeta concilii) protein is Acetyl-coenzyme A synthetase.